The primary structure comprises 583 residues: Probable lysosomal cobalamin transporter (583 aa).

Helical transmembrane passes span 8–28 (LIWAVYAIVVAILAAVASVFI), 41–61 (VILTCIVAVTTLLATVLLVPV), 95–115 (IVYYFLYSLDALLCLIVIPFI), 145–165 (TVSFLAIVVVLFLVGFFVPVA), 188–208 (ALTFALGLLITIGLCLYVLYT), 312–332 (LLSGVIFSLLALIIWISMLLT), 347–367 (GYILGHINVFNPINWVFVQSA), 375–395 (VIFTLLVLFLFSSSIVGISAV), 418–438 (LLATAMLMLIILALNYSTSMI), and 506–526 (FFGAIFFWAQFAFLGIYLLVM). Positions 541–552 (LDEDAEEAEEES) are enriched in acidic residues. Residues 541-562 (LDEDAEEAEEESLLANTRGRAE) form a disordered region.

This sequence belongs to the LIMR family. LMBRD1 subfamily.

The protein resides in the lysosome membrane. Its function is as follows. Probable lysosomal cobalamin transporter. Required to export cobalamin from lysosomes allowing its conversion to cofactors. The protein is Probable lysosomal cobalamin transporter of Aspergillus oryzae (strain ATCC 42149 / RIB 40) (Yellow koji mold).